The chain runs to 413 residues: O-methyltransferase kntB (413 aa).

S-adenosyl-L-methionine-binding positions include 255-256 (GG), Asp-280, 302-303 (NF), and Arg-319. Catalysis depends on His-322, which acts as the Proton acceptor.

The protein belongs to the class I-like SAM-binding methyltransferase superfamily. Cation-independent O-methyltransferase family. Requires S-adenosyl-L-methionine as cofactor.

Its pathway is secondary metabolite biosynthesis. Non-reducing polyketide synthase; part of the gene cluster that mediates the biosynthesis of the bicoumarin kotanin. The non-reducing polyketide synthase ktnS first catalyzes the formation of the pentaketidic 4,7-dihydroxy-5-methylcoumarin from acetyl coenzyme A and 4 malonyl coenzyme A molecules. Further O-methylation by ktnB leads to the formation of 7-demethylsiderin. Then, an oxidative phenol coupling catalyzed by the cytochrome P450 monooxygenase ktnC forms the 8,8'-dimer P-orlandin via dimerization the monomeric precursor, 7-demethylsiderin. P-orlandin is subsequently O-methylated in a stepwise fashion to demethylkotanin and kotanin. The chain is O-methyltransferase kntB from Aspergillus niger (strain ATCC MYA-4892 / CBS 513.88 / FGSC A1513).